Reading from the N-terminus, the 651-residue chain is Acetyl-coenzyme A synthetase 1 (651 aa).

CoA contacts are provided by residues arginine 191–lysine 194, threonine 311, and asparagine 335. ATP contacts are provided by residues glycine 387–proline 389, aspartate 411–threonine 416, aspartate 500, and arginine 515. Residue serine 523 coordinates CoA. Arginine 526 lines the ATP pocket. The Mg(2+) site is built by valine 537, histidine 539, and valine 542. CoA is bound at residue arginine 584. Lysine 609 bears the N6-acetyllysine mark.

The protein belongs to the ATP-dependent AMP-binding enzyme family. Mg(2+) serves as cofactor. Post-translationally, acetylated. Deacetylation by the SIR2-homolog deacetylase activates the enzyme.

It catalyses the reaction acetate + ATP + CoA = acetyl-CoA + AMP + diphosphate. Its function is as follows. Catalyzes the conversion of acetate into acetyl-CoA (AcCoA), an essential intermediate at the junction of anabolic and catabolic pathways. AcsA undergoes a two-step reaction. In the first half reaction, AcsA combines acetate with ATP to form acetyl-adenylate (AcAMP) intermediate. In the second half reaction, it can then transfer the acetyl group from AcAMP to the sulfhydryl group of CoA, forming the product AcCoA. In Pseudomonas aeruginosa (strain ATCC 15692 / DSM 22644 / CIP 104116 / JCM 14847 / LMG 12228 / 1C / PRS 101 / PAO1), this protein is Acetyl-coenzyme A synthetase 1.